Reading from the N-terminus, the 98-residue chain is Cystatin-B (98 aa).

Position 1 is an N-acetylmethionine (Met1). The Secondary area of contact signature appears at 46-50 (QVVAG).

The protein belongs to the cystatin family. As to quaternary structure, able to form dimers stabilized by noncovalent forces.

It is found in the cytoplasm. Its subcellular location is the nucleus. This is an intracellular thiol proteinase inhibitor. Tightly binding reversible inhibitor of cathepsins L, H and B. The protein is Cystatin-B (CSTB) of Pongo pygmaeus (Bornean orangutan).